We begin with the raw amino-acid sequence, 274 residues long: Large ribosomal subunit protein uL2 (274 aa).

Disordered regions lie at residues 28-53 and 223-274; these read APYA…TVRH and VAMN…RRNK. The span at 39 to 48 shows a compositional bias: low complexity; that stretch reads KSGGRNNNGR.

The protein belongs to the universal ribosomal protein uL2 family. As to quaternary structure, part of the 50S ribosomal subunit. Forms a bridge to the 30S subunit in the 70S ribosome.

Functionally, one of the primary rRNA binding proteins. Required for association of the 30S and 50S subunits to form the 70S ribosome, for tRNA binding and peptide bond formation. It has been suggested to have peptidyltransferase activity; this is somewhat controversial. Makes several contacts with the 16S rRNA in the 70S ribosome. This Pseudoalteromonas atlantica (strain T6c / ATCC BAA-1087) protein is Large ribosomal subunit protein uL2.